Reading from the N-terminus, the 205-residue chain is Superoxide dismutase [Mn] (205 aa).

Positions 30, 78, 166, and 170 each coordinate Mn(2+).

This sequence belongs to the iron/manganese superoxide dismutase family. In terms of assembly, homodimer. The cofactor is Mn(2+).

The catalysed reaction is 2 superoxide + 2 H(+) = H2O2 + O2. Destroys superoxide anion radicals which are normally produced within the cells and which are toxic to biological systems. This chain is Superoxide dismutase [Mn] (sodA), found in Chlamydia muridarum (strain MoPn / Nigg).